The primary structure comprises 1969 residues: Protein mono-ADP-ribosyltransferase PARP4 (1969 aa).

Residues 1-94 (MTLGIFANCI…RLLDVRNYDP (94 aa)) form the BRCT domain. The Nuclear localization signal signature appears at 19–25 (PRQQKKK). Positions 92 to 132 (YDPLSPAPAAPPAERSRSEVQSEYLPSDNTPEKENTEVTEV) are disordered. Positions 235 to 363 (SEKLQALLLE…ETNLSKPNPP (129 aa)) constitute a PARP alpha-helical domain. Residues 362–566 (PPSLAKYRAL…FCTPGDQIKE (205 aa)) form the PARP catalytic domain. In terms of domain architecture, VIT spans 600 to 728 (TNIKAGLQDA…KVLIKITYIT (129 aa)). A VWFA domain is found at 869–1039 (EVIICLDCSS…KQIEAQMTRI (171 aa)). A Phosphoserine modification is found at serine 1229. The Nuclear localization signal motif lies at 1230-1242 (DGHGVLQPVSVSS). 5 stretches are compositionally biased toward pro residues: residues 1372–1387 (PPHPLGGTHPPPPLPL), 1402–1417 (HPPPPLFGGTLIPPPS), 1425–1444 (LPPPPPLPGGTHIPPPPPIP), 1485–1513 (LPPPPLLPAGTHIPPPPPITGSTHPPPPS), and 1521–1540 (LPPPPPLPGGTHIPPPPPIP). The disordered stretch occupies residues 1372–1608 (PPHPLGGTHP…AGTQFSLSPI (237 aa)). Positions 1443-1541 (IPGGTLIPPS…HIPPPPPIPG (99 aa)) constitute an FH1 domain. Positions 1541–1556 (GGTLIPSPSSLFGGTH) are enriched in low complexity. Positions 1557-1585 (LPPPPLLPAGTHIPPPPPITGSTHPPPPS) are enriched in pro residues. The tract at residues 1808–1969 (FCDEDQESPV…LHRILYYSQG (162 aa)) is interaction with the major vault protein.

This sequence belongs to the ARTD/PARP family. As to quaternary structure, component of the vault ribonucleoprotein particle, at least composed of MVP, PARP4 and one or more vault RNAs (vRNAs). Interacts with TEP1.

It is found in the cytoplasm. Its subcellular location is the nucleus. The catalysed reaction is L-aspartyl-[protein] + NAD(+) = 4-O-(ADP-D-ribosyl)-L-aspartyl-[protein] + nicotinamide. It catalyses the reaction L-glutamyl-[protein] + NAD(+) = 5-O-(ADP-D-ribosyl)-L-glutamyl-[protein] + nicotinamide. Mono-ADP-ribosyltransferase that mediates mono-ADP-ribosylation of target proteins. The protein is Protein mono-ADP-ribosyltransferase PARP4 of Mus musculus (Mouse).